The chain runs to 73 residues: Large ribosomal subunit protein eL20 (73 aa).

This sequence belongs to the eukaryotic ribosomal protein eL20 family. In terms of assembly, part of the 50S ribosomal subunit. Binds 23S rRNA.

This chain is Large ribosomal subunit protein eL20, found in Methanococcus aeolicus (strain ATCC BAA-1280 / DSM 17508 / OCM 812 / Nankai-3).